Consider the following 145-residue polypeptide: UPF0201 protein STK_09490 (145 aa).

Belongs to the UPF0201 family.

The chain is UPF0201 protein STK_09490 from Sulfurisphaera tokodaii (strain DSM 16993 / JCM 10545 / NBRC 100140 / 7) (Sulfolobus tokodaii).